A 207-amino-acid chain; its full sequence is Thiamine-phosphate synthase (207 aa).

Residues 37–41 (QYRDK) and Asn69 each bind 4-amino-2-methyl-5-(diphosphooxymethyl)pyrimidine. Mg(2+) contacts are provided by Asp70 and Asp89. Ser108 contributes to the 4-amino-2-methyl-5-(diphosphooxymethyl)pyrimidine binding site. 135-137 (SRT) contributes to the 2-[(2R,5Z)-2-carboxy-4-methylthiazol-5(2H)-ylidene]ethyl phosphate binding site. A 4-amino-2-methyl-5-(diphosphooxymethyl)pyrimidine-binding site is contributed by Lys138. Position 164 (Gly164) interacts with 2-[(2R,5Z)-2-carboxy-4-methylthiazol-5(2H)-ylidene]ethyl phosphate.

The protein belongs to the thiamine-phosphate synthase family. It depends on Mg(2+) as a cofactor.

The enzyme catalyses 2-[(2R,5Z)-2-carboxy-4-methylthiazol-5(2H)-ylidene]ethyl phosphate + 4-amino-2-methyl-5-(diphosphooxymethyl)pyrimidine + 2 H(+) = thiamine phosphate + CO2 + diphosphate. It catalyses the reaction 2-(2-carboxy-4-methylthiazol-5-yl)ethyl phosphate + 4-amino-2-methyl-5-(diphosphooxymethyl)pyrimidine + 2 H(+) = thiamine phosphate + CO2 + diphosphate. It carries out the reaction 4-methyl-5-(2-phosphooxyethyl)-thiazole + 4-amino-2-methyl-5-(diphosphooxymethyl)pyrimidine + H(+) = thiamine phosphate + diphosphate. It functions in the pathway cofactor biosynthesis; thiamine diphosphate biosynthesis; thiamine phosphate from 4-amino-2-methyl-5-diphosphomethylpyrimidine and 4-methyl-5-(2-phosphoethyl)-thiazole: step 1/1. Its function is as follows. Condenses 4-methyl-5-(beta-hydroxyethyl)thiazole monophosphate (THZ-P) and 2-methyl-4-amino-5-hydroxymethyl pyrimidine pyrophosphate (HMP-PP) to form thiamine monophosphate (TMP). This is Thiamine-phosphate synthase from Chromobacterium violaceum (strain ATCC 12472 / DSM 30191 / JCM 1249 / CCUG 213 / NBRC 12614 / NCIMB 9131 / NCTC 9757 / MK).